Here is a 405-residue protein sequence, read N- to C-terminus: Putative polysaccharide ligase RT0347 (405 aa).

Helical transmembrane passes span isoleucine 23–isoleucine 43, leucine 77–valine 97, isoleucine 120–isoleucine 140, phenylalanine 156–isoleucine 178, isoleucine 201–alanine 221, isoleucine 227–alanine 247, leucine 270–phenylalanine 290, isoleucine 322–tyrosine 342, isoleucine 353–tyrosine 375, and isoleucine 377–valine 397.

It belongs to the O-antigen ligase family.

It localises to the membrane. In Rickettsia typhi (strain ATCC VR-144 / Wilmington), this protein is Putative polysaccharide ligase RT0347.